The chain runs to 82 residues: uncharacterized protein (82 aa).

This is an uncharacterized protein from Orgyia pseudotsugata (Douglas-fir tussock moth).